A 168-amino-acid polypeptide reads, in one-letter code: Thermonuclease (168 aa).

An N-terminal signal peptide occupies residues 1–27 (MKKITTGVLILAIAIVVLIFQYINGDG). Catalysis depends on residues Arg64, Glu72, and Arg114.

It belongs to the thermonuclease family. Ca(2+) serves as cofactor.

The protein localises to the secreted. It catalyses the reaction Endonucleolytic cleavage to nucleoside 3'-phosphates and 3'-phosphooligonucleotide end-products.. Functionally, enzyme that catalyzes the hydrolysis of both DNA and RNA at the 5'-position of the phosphodiester bond. The polypeptide is Thermonuclease (nucI) (Staphylococcus intermedius).